A 122-amino-acid chain; its full sequence is Ribonuclease P protein component (122 aa).

Belongs to the RnpA family. As to quaternary structure, consists of a catalytic RNA component (M1 or rnpB) and a protein subunit.

The enzyme catalyses Endonucleolytic cleavage of RNA, removing 5'-extranucleotides from tRNA precursor.. In terms of biological role, RNaseP catalyzes the removal of the 5'-leader sequence from pre-tRNA to produce the mature 5'-terminus. It can also cleave other RNA substrates such as 4.5S RNA. The protein component plays an auxiliary but essential role in vivo by binding to the 5'-leader sequence and broadening the substrate specificity of the ribozyme. The sequence is that of Ribonuclease P protein component from Roseiflexus castenholzii (strain DSM 13941 / HLO8).